Here is a 183-residue protein sequence, read N- to C-terminus: Capsid protein (183 aa).

The interval 136–183 (NAPILSTLPETTVVRRRGRSPRRRTPSPRRRRSQSPRRRRSQSPASQC) is disordered. Residues 149 to 176 (VRRRGRSPRRRTPSPRRRRSQSPRRRRS) show a composition bias toward basic residues. Residues Ser155, Ser162, and Ser170 each carry the phosphoserine; by host modification. The 1; half-length repeat unit spans residues 155-161 (SPRRRTP). Residues 155–177 (SPRRRTPSPRRRRSQSPRRRRSQ) are 3 X 8 AA repeats of S-P-R-R-R-[PR]-S-Q. The Bipartite nuclear localization signal signature appears at 158–175 (RRTPSPRRRRSQSPRRRR). 2 consecutive repeat copies span residues 162-169 (SPRRRRSQ) and 170-177 (SPRRRRSQ). The RNA binding stretch occupies residues 177–183 (QSPASQC).

The protein belongs to the orthohepadnavirus core antigen family. In terms of assembly, homodimerizes, then multimerizes. Interacts with cytosol exposed regions of viral L glycoprotein present in the reticulum-to-Golgi compartment. Interacts with human FLNB. Phosphorylated form interacts with host importin alpha; this interaction depends on the exposure of the NLS, which itself depends upon genome maturation and/or phosphorylation of the capsid protein. Interacts with host NUP153. In terms of processing, phosphorylated by host SRPK1, SRPK2, and maybe protein kinase C or GAPDH. Phosphorylation is critical for pregenomic RNA packaging. Protein kinase C phosphorylation is stimulated by HBx protein and may play a role in transport of the viral genome to the nucleus at the late step during the viral replication cycle.

It is found in the virion. The protein localises to the host cytoplasm. Its function is as follows. Self assembles to form an icosahedral capsid. Most capsids appear to be large particles with an icosahedral symmetry of T=4 and consist of 240 copies of capsid protein, though a fraction forms smaller T=3 particles consisting of 180 capsid proteins. Entering capsids are transported along microtubules to the nucleus. Phosphorylation of the capsid is thought to induce exposure of nuclear localization signal in the C-terminal portion of the capsid protein that allows binding to the nuclear pore complex via the importin (karyopherin-) alpha and beta. Capsids are imported in intact form through the nuclear pore into the nuclear basket, where it probably binds NUP153. Only capsids that contain the mature viral genome can release the viral DNA and capsid protein into the nucleoplasm. Immature capsids get stuck in the basket. Capsids encapsulate the pre-genomic RNA and the P protein. Pre-genomic RNA is reverse-transcribed into DNA while the capsid is still in the cytoplasm. The capsid can then either be directed to the nucleus, providing more genomes for transcription, or bud through the endoplasmic reticulum to provide new virions. The polypeptide is Capsid protein (Hylobatidae (gibbons)).